We begin with the raw amino-acid sequence, 305 residues long: Maximins-S type B/C (305 aa).

The signal sequence occupies residues 1-18 (MNFNYFILVLFFITSGHA). 2 propeptides span residues 19-35 (KSET…HIKR) and 52-65 (SAEE…LVTR). The residue at position 83 (Asn-83) is an Asparagine amide. Residues 87–100 (SAEEQDLAEHLVTR) constitute a propeptide that is removed on maturation. Asn-118 is modified (asparagine amide). The propeptide occupies 122 to 135 (SAEEQDLAEDLVTR). Residue Lys-153 is modified to Lysine amide. A propeptide spanning residues 157 to 170 (SAEDQDLAEDLVTR) is cleaved from the precursor. An Asparagine amide modification is found at Asn-188. The propeptide occupies 192–205 (SAEEQDLAEHLVTR). At Asn-223 the chain carries Asparagine amide. Positions 227–240 (SAEEQDLSEDLVTR) are excised as a propeptide. The residue at position 258 (Asn-258) is an Asparagine amide. Residues 262–275 (SAEEQDLVEDLVTR) constitute a propeptide that is removed on maturation. A Lysine amide modification is found at Lys-293. Positions 297-305 (SAEQEKDMK) are excised as a propeptide.

Belongs to the maximin-S family. Expressed by the skin dorsal glands.

Its subcellular location is the secreted. Its function is as follows. Maximin-S1 has no antimicrobial activity. Has no hemolytic activity. Functionally, maximin-S2 has an activity against mycoplasma but has no activity against common Gram-positive and Gram-negative bacteria nor fungi. Has no hemolytic activity. Maximin-S3 has an activity against mycoplasma but has no activity against common Gram-positive and Gram-negative bacteria nor fungi. Has no hemolytic activity. In terms of biological role, maximin-S4 has an activity against mycoplasma but has no activity against common Gram-positive and Gram-negative bacteria nor fungi. Has no hemolytic activity. Its function is as follows. Maximin-S5 has an activity against mycoplasma but has no activity against common Gram-positive and Gram-negative bacteria nor fungi. Has no hemolytic activity. In Bombina maxima (Giant fire-bellied toad), this protein is Maximins-S type B/C.